Here is a 265-residue protein sequence, read N- to C-terminus: Protein synthesis inhibitor PD-S2 (265 aa).

2 disulfides stabilise this stretch: Cys34–Cys262 and Cys88–Cys110. A glycan (N-linked (GlcNAc...) asparagine) is linked at Asn120.

Belongs to the ribosome-inactivating protein family. Type 1 RIP subfamily. In terms of processing, glycosylated. Seeds.

It carries out the reaction Endohydrolysis of the N-glycosidic bond at one specific adenosine on the 28S rRNA.. Its function is as follows. Inhibits protein synthesis in animal cells. Useful as immunotoxin for pharmacological applications. In Phytolacca dioica (Bella sombra tree), this protein is Protein synthesis inhibitor PD-S2.